A 172-amino-acid chain; its full sequence is 3-phenylpropionate/cinnamic acid dioxygenase subunit beta (172 aa).

This sequence belongs to the bacterial ring-hydroxylating dioxygenase beta subunit family. As to quaternary structure, this dioxygenase system consists of four proteins: the two subunits of the hydroxylase component (HcaE and HcaF), a ferredoxin (HcaC) and a ferredoxin reductase (HcaD).

It catalyses the reaction 3-phenylpropanoate + NADH + O2 + H(+) = 3-(cis-5,6-dihydroxycyclohexa-1,3-dien-1-yl)propanoate + NAD(+). The enzyme catalyses (E)-cinnamate + NADH + O2 + H(+) = (2E)-3-(cis-5,6-dihydroxycyclohexa-1,3-dien-1-yl)prop-2-enoate + NAD(+). The protein operates within aromatic compound metabolism; 3-phenylpropanoate degradation. Its function is as follows. Part of the multicomponent 3-phenylpropionate dioxygenase. Converts 3-phenylpropionic acid (PP) and cinnamic acid (CI) into 3-phenylpropionate-dihydrodiol (PP-dihydrodiol) and cinnamic acid-dihydrodiol (CI-dihydrodiol), respectively. The polypeptide is 3-phenylpropionate/cinnamic acid dioxygenase subunit beta (Shigella sonnei (strain Ss046)).